The sequence spans 501 residues: Phosphatase and actin regulator 1 (501 aa).

The stretch at 1–18 (MRQSREELIKRGVLKEIF) is one RPEL 1 repeat. Disordered stretches follow at residues 21–46 (DGEL…QVLS) and 295–329 (DNKE…EDNS). A compositionally biased stretch (low complexity) spans 36 to 46 (GQPLGSGQVLS). Positions 295-304 (DNKENVPHEA) are enriched in basic and acidic residues. The segment covering 317–328 (EEEEEEDEDEDN) has biased composition (acidic residues). RPEL repeat units follow at residues 343-368 (DSLA…PMQT), 381-406 (TKLT…KPRN), and 419-444 (RRLT…IRFS). Residues 382–415 (KLTRRLSQRPTAEELEQRNILKPRNEQEEQEEKR) form a disordered region. Residues 392 to 415 (TAEELEQRNILKPRNEQEEQEEKR) show a composition bias toward basic and acidic residues.

The protein belongs to the phosphatase and actin regulator family. In terms of assembly, interacts (via RPEL repeats) with ACTA1. Expressed in the gizzard, and in neurons from central and peripheral nervous systems.

The protein localises to the cytoplasm. Its subcellular location is the synapse. The protein resides in the nucleus. Functionally, binds actin monomers (G actin) and plays a role in the reorganization of the actin cytoskeleton and in formation of actin stress fibers. The sequence is that of Phosphatase and actin regulator 1 (PHACTR1) from Gallus gallus (Chicken).